The following is a 339-amino-acid chain: Biotin synthase (339 aa).

The Radical SAM core domain maps to 55–282 (NAVQLSTLLS…KAVVRLSAGR (228 aa)). The [4Fe-4S] cluster site is built by cysteine 70, cysteine 74, and cysteine 77. [2Fe-2S] cluster contacts are provided by cysteine 114, cysteine 145, cysteine 205, and arginine 277.

The protein belongs to the radical SAM superfamily. Biotin synthase family. As to quaternary structure, homodimer. It depends on [4Fe-4S] cluster as a cofactor. Requires [2Fe-2S] cluster as cofactor.

It catalyses the reaction (4R,5S)-dethiobiotin + (sulfur carrier)-SH + 2 reduced [2Fe-2S]-[ferredoxin] + 2 S-adenosyl-L-methionine = (sulfur carrier)-H + biotin + 2 5'-deoxyadenosine + 2 L-methionine + 2 oxidized [2Fe-2S]-[ferredoxin]. Its pathway is cofactor biosynthesis; biotin biosynthesis; biotin from 7,8-diaminononanoate: step 2/2. Its function is as follows. Catalyzes the conversion of dethiobiotin (DTB) to biotin by the insertion of a sulfur atom into dethiobiotin via a radical-based mechanism. This is Biotin synthase from Burkholderia ambifaria (strain MC40-6).